Consider the following 331-residue polypeptide: 3-dehydrosphinganine reductase TSC10B (331 aa).

Over 1-7 (MAAIFSL) the chain is Lumenal. The chain crosses the membrane as a helical span at residues 8–28 (FLFFILFIVSLLIILSFIVRP). Residues 29–262 (RSVTIPIKFR…ICFDGIKAGK (234 aa)) lie on the Cytoplasmic side of the membrane. NADPH-binding residues include glycine 44, serine 46, serine 47, glycine 48, arginine 69, lysine 73, and aspartate 95. Positions 44–48 (GGSSG) match the GXSXG motif. The Proton donor role is filled by serine 172. Tyrosine 186 functions as the Proton acceptor in the catalytic mechanism. The NADP(+) site is built by tyrosine 186 and lysine 190. Lysine 190 serves as the catalytic Lowers pKa of active site Tyr. A helical membrane pass occupies residues 263-283 (FTVTCHFIGFLLSIASTGMSP). The Lumenal segment spans residues 284 to 286 (QGS). A helical transmembrane segment spans residues 287–307 (FWLALTEVMFGGLIRLASLVF). At 308–331 (QWQWYKTIEKWSQRNKKEVNSKLA) the chain is on the cytoplasmic side.

It belongs to the short-chain dehydrogenases/reductases (SDR) family. As to expression, expressed in roots, leaves, stems and flowers.

It localises to the endoplasmic reticulum membrane. It carries out the reaction sphinganine + NADP(+) = 3-oxosphinganine + NADPH + H(+). It participates in lipid metabolism; sphingolipid metabolism. Catalyzes the reduction of 3'-oxosphinganine (3-ketodihydrosphingosine/KDS) to sphinganine (dihydrosphingosine/DHS), the second step of de novo sphingolipid biosynthesis. In plants, sphingolipids seems to play a critical role in mineral ion homeostasis, most likely through their involvement in the ion transport functionalities of membrane systems in the root. Is stereospecific for D-erythro-DHS production and does not produce L-threo-DHS. This Arabidopsis thaliana (Mouse-ear cress) protein is 3-dehydrosphinganine reductase TSC10B (TSC10B).